Consider the following 205-residue polypeptide: Penta-EF hand domain-containing protein 2 (205 aa).

EF-hand domains are found at residues 45–75, 76–111, and 119–141; these read EMQSWFMRVDANRSGTISSGELQYLNIGGTP, LGIETATKLIKVFDHNKNGQIDFYEYAALHQFINNL, and DRNFSGTIDANEIYNALITSGFQ. Ca(2+)-binding residues include D54, N56, S58, T60, E65, D89, N91, N93, Q95, and E100.

Belongs to the Peflin/Sorcin family. In terms of assembly, in contrast to pefA, does not form homodimers in presence of Ca(2+). May form heterodimers with pefA.

Its subcellular location is the cytoplasm. The protein localises to the membrane. This chain is Penta-EF hand domain-containing protein 2 (pefB), found in Dictyostelium discoideum (Social amoeba).